Consider the following 179-residue polypeptide: MYEYLDRRYALALYEVAEENNKVDEYLRDLKEVVNIIKNSEDICKILKHPEINTSRKKEIFTELFKDKVDDKILSFLLVLIEKDRILYLEEKLKEMEKIYLEKNNMILANVKTVIPLLKEEREELIEKLGNKYNKKIILEEEIDKSIIGGVYVRVGDDVLDGTLSTRLKDIKKMMLKRE.

It belongs to the ATPase delta chain family. As to quaternary structure, F-type ATPases have 2 components, F(1) - the catalytic core - and F(0) - the membrane proton channel. F(1) has five subunits: alpha(3), beta(3), gamma(1), delta(1), epsilon(1). F(0) has three main subunits: a(1), b(2) and c(10-14). The alpha and beta chains form an alternating ring which encloses part of the gamma chain. F(1) is attached to F(0) by a central stalk formed by the gamma and epsilon chains, while a peripheral stalk is formed by the delta and b chains.

The protein localises to the cell membrane. F(1)F(0) ATP synthase produces ATP from ADP in the presence of a proton or sodium gradient. F-type ATPases consist of two structural domains, F(1) containing the extramembraneous catalytic core and F(0) containing the membrane proton channel, linked together by a central stalk and a peripheral stalk. During catalysis, ATP synthesis in the catalytic domain of F(1) is coupled via a rotary mechanism of the central stalk subunits to proton translocation. Its function is as follows. This protein is part of the stalk that links CF(0) to CF(1). It either transmits conformational changes from CF(0) to CF(1) or is implicated in proton conduction. This chain is ATP synthase subunit delta, found in Clostridium botulinum (strain Okra / Type B1).